The sequence spans 370 residues: 2-oxoisovalerate dehydrogenase subunit beta, mitochondrial (370 aa).

The transit peptide at 1–25 directs the protein to the mitochondrion; the sequence is MLRGNNIKKVNSLLVRSFHSTVGNR. Tyrosine 130 provides a ligand contact to thiamine diphosphate. Residues glycine 156, leucine 158, threonine 159, and glutamate 209 each coordinate K(+).

As to quaternary structure, heterotetramer of 2 alpha and 2 beta chains. The cofactor is thiamine diphosphate.

The protein resides in the mitochondrion matrix. The catalysed reaction is N(6)-[(R)-lipoyl]-L-lysyl-[protein] + 3-methyl-2-oxobutanoate + H(+) = N(6)-[(R)-S(8)-2-methylpropanoyldihydrolipoyl]-L-lysyl-[protein] + CO2. In terms of biological role, the branched-chain alpha-keto dehydrogenase complex catalyzes the overall conversion of alpha-keto acids to acyl-CoA and CO(2). It contains multiple copies of three enzymatic components: branched-chain alpha-keto acid decarboxylase (E1), lipoamide acyltransferase (E2) and lipoamide dehydrogenase (E3). In Dictyostelium discoideum (Social amoeba), this protein is 2-oxoisovalerate dehydrogenase subunit beta, mitochondrial (bkdB).